A 101-amino-acid chain; its full sequence is Thioredoxin 1 (101 aa).

A Thioredoxin domain is found at 2-101; it reads AQTLDDLIRT…MRQEVLKAIG (100 aa). Cysteine 25 and cysteine 28 are joined by a disulfide.

This sequence belongs to the thioredoxin family.

In terms of biological role, participates in various redox reactions through the reversible oxidation of its active center dithiol to a disulfide and catalyzes dithiol-disulfide exchange reactions. This Chlorobaculum tepidum (strain ATCC 49652 / DSM 12025 / NBRC 103806 / TLS) (Chlorobium tepidum) protein is Thioredoxin 1 (trx1).